A 455-amino-acid polypeptide reads, in one-letter code: Epoxide hydrolase 1 (455 aa).

A helical; Signal-anchor for type III membrane protein membrane pass occupies residues 1-21 (MWLELVLASLLGFVIYWFVSR). Over 22–455 (DKEETLPLGD…RKFVSLAELQ (434 aa)) the chain is Cytoplasmic. The active-site Nucleophile is Asp226. Arg295 bears the Dimethylated arginine mark. Tyr374 functions as the Proton donor in the catalytic mechanism. The active-site Proton acceptor is the His431. Lys439 carries the N6-acetyllysine modification.

Belongs to the peptidase S33 family.

It is found in the microsome membrane. Its subcellular location is the endoplasmic reticulum membrane. The enzyme catalyses cis-stilbene oxide + H2O = (1R,2R)-hydrobenzoin. The catalysed reaction is 1-(4-methoxyphenyl)-N-methyl-N-[(3-methyloxetan-3-yl)methyl]methanamine + H2O = 2-{[(4-methoxybenzyl)(methyl)amino]methyl}-2-methylpropane-1,3-diol. It catalyses the reaction 8,9-epoxy-(5Z,11Z,14Z)-eicosatrienoate + H2O = 8,9-dihydroxy-(5Z,11Z,14Z)-eicosatrienoate. It carries out the reaction 11,12-epoxy-(5Z,8Z,14Z)-eicosatrienoate + H2O = 11,12-dihydroxy-(5Z,8Z,14Z)-eicosatrienoate. The enzyme catalyses 2-(5Z,8Z,11Z,14Z-eicosatetraenoyl)-glycerol + H2O = glycerol + (5Z,8Z,11Z,14Z)-eicosatetraenoate + H(+). With respect to regulation, inhibited by 10-hydroxystearamide and methoxy-arachidonyl fluorophosphate. Its function is as follows. Biotransformation enzyme that catalyzes the hydrolysis of arene and aliphatic epoxides to less reactive and more water soluble dihydrodiols by the trans addition of water. May play a role in the metabolism of endogenous lipids such as epoxide-containing fatty acids. Metabolizes the abundant endocannabinoid 2-arachidonoylglycerol (2-AG) to free arachidonic acid (AA) and glycerol. Binds 20(S)-hydroxycholesterol (20(S)-OHC). This Rattus norvegicus (Rat) protein is Epoxide hydrolase 1.